Consider the following 790-residue polypeptide: Protein SEY1 (790 aa).

The Cytoplasmic segment spans residues 1–692 (MELSEGELSH…KRSIVQHITQ (692 aa)). The GB1/RHD3-type G domain maps to 55–284 (GNNYHIISVF…VNNELFKPEY (230 aa)). 65 to 72 (GSQSTGKS) is a GTP binding site. A helical transmembrane segment spans residues 693-713 (IPYYIYLIILVLGWNEFMAII). At 714–716 (RNP) the chain is on the lumenal side. Residues 717–737 (LFFSLSIVLGATVYVLYYLNL) traverse the membrane as a helical segment. At 738–790 (LKPAMLVAQRTMDEVIIMAKTKLREVLIDDHEVTGRQLNKIAGGKENIELDDM) the chain is on the cytoplasmic side.

It belongs to the TRAFAC class dynamin-like GTPase superfamily. GB1/RHD3 GTPase family. RHD3 subfamily.

It localises to the endoplasmic reticulum membrane. Its function is as follows. Cooperates with the reticulon proteins and tubule-shaping DP1 family proteins to generate and maintain the structure of the tubular endoplasmic reticulum network. Has GTPase activity, which is required for its function in ER organization. The protein is Protein SEY1 of Candida dubliniensis (strain CD36 / ATCC MYA-646 / CBS 7987 / NCPF 3949 / NRRL Y-17841) (Yeast).